The following is a 544-amino-acid chain: CTP synthase (544 aa).

The interval 1-265 is amidoligase domain; sequence MTKFIFVTGG…DNIITEQLQL (265 aa). Ser13 contacts CTP. Ser13 contacts UTP. ATP-binding positions include 14–19 and Asp71; that span reads SLGKGI. 2 residues coordinate Mg(2+): Asp71 and Glu139. CTP is bound by residues 146–148, 186–191, and Lys222; these read DIE and KTKPTQ. UTP-binding positions include 186-191 and Lys222; that span reads KTKPTQ. The region spanning 290-544 is the Glutamine amidotransferase type-1 domain; that stretch reads KIAMVGKYVD…VKAALNNKKA (255 aa). Gly353 lines the L-glutamine pocket. The active-site Nucleophile; for glutamine hydrolysis is the Cys380. L-glutamine-binding positions include 381-384, Glu404, and Arg471; that span reads LGMQ. Active-site residues include His517 and Glu519.

The protein belongs to the CTP synthase family. As to quaternary structure, homotetramer.

The catalysed reaction is UTP + L-glutamine + ATP + H2O = CTP + L-glutamate + ADP + phosphate + 2 H(+). It carries out the reaction L-glutamine + H2O = L-glutamate + NH4(+). It catalyses the reaction UTP + NH4(+) + ATP = CTP + ADP + phosphate + 2 H(+). Its pathway is pyrimidine metabolism; CTP biosynthesis via de novo pathway; CTP from UDP: step 2/2. Its activity is regulated as follows. Allosterically activated by GTP, when glutamine is the substrate; GTP has no effect on the reaction when ammonia is the substrate. The allosteric effector GTP functions by stabilizing the protein conformation that binds the tetrahedral intermediate(s) formed during glutamine hydrolysis. Inhibited by the product CTP, via allosteric rather than competitive inhibition. In terms of biological role, catalyzes the ATP-dependent amination of UTP to CTP with either L-glutamine or ammonia as the source of nitrogen. Regulates intracellular CTP levels through interactions with the four ribonucleotide triphosphates. The protein is CTP synthase of Neisseria meningitidis serogroup A / serotype 4A (strain DSM 15465 / Z2491).